The chain runs to 841 residues: Protein translocase subunit SecA (841 aa).

ATP is bound by residues Gln-87, Gly-105–Thr-109, and Asp-494. The Zn(2+) site is built by Cys-825, Cys-827, Cys-836, and Cys-837.

The protein belongs to the SecA family. As to quaternary structure, monomer and homodimer. Part of the essential Sec protein translocation apparatus which comprises SecA, SecYEG and auxiliary proteins SecDF-YajC and YidC. It depends on Zn(2+) as a cofactor.

It localises to the cell inner membrane. The protein localises to the cytoplasm. It carries out the reaction ATP + H2O + cellular proteinSide 1 = ADP + phosphate + cellular proteinSide 2.. Part of the Sec protein translocase complex. Interacts with the SecYEG preprotein conducting channel. Has a central role in coupling the hydrolysis of ATP to the transfer of proteins into and across the cell membrane, serving as an ATP-driven molecular motor driving the stepwise translocation of polypeptide chains across the membrane. The sequence is that of Protein translocase subunit SecA from Syntrophus aciditrophicus (strain SB).